The chain runs to 303 residues: Sterol-4-alpha-carboxylate 3-dehydrogenase ERG26, decarboxylating (303 aa).

Residues 8-9 (SL) and 30-32 (TAS) contribute to the NADP(+) site. Ser-71 is a substrate binding site. The interval 77–96 (PTQEPTSEENAHRYDENNAP) is disordered. NADP(+)-binding positions include Tyr-102, Lys-106, and 128-131 (IPGI). Tyr-102 lines the substrate pocket. Lys-106 (proton donor) is an active-site residue.

It belongs to the 3-beta-HSD family. Heterotetramer of ERG25, ERG26, ERG27 and ERG28. ERG28 acts as a scaffold to tether ERG27 and other 4,4-demethylation-related enzymes, forming a demethylation enzyme complex, in the endoplasmic reticulum.

The protein resides in the endoplasmic reticulum membrane. The protein operates within steroid metabolism; ergosterol biosynthesis. Its function is as follows. Sterol-4-alpha-carboxylate 3-dehydrogenase; part of the third module of ergosterol biosynthesis pathway that includes the late steps of the pathway. ERG26 is a catalytic component of the C-4 demethylation complex that catalyzes the conversion of 4,4-dimethylfecosterol into fecosterol via 4-methylfecosterol. The third module or late pathway involves the ergosterol synthesis itself through consecutive reactions that mainly occur in the endoplasmic reticulum (ER) membrane. Firstly, the squalene synthase ERG9 catalyzes the condensation of 2 farnesyl pyrophosphate moieties to form squalene, which is the precursor of all steroids. Squalene synthase is crucial for balancing the incorporation of farnesyl diphosphate (FPP) into sterol and nonsterol isoprene synthesis. Secondly, squalene is converted into lanosterol by the consecutive action of the squalene epoxidase ERG1 and the lanosterol synthase ERG7. Then, the delta(24)-sterol C-methyltransferase ERG6 methylates lanosterol at C-24 to produce eburicol. Eburicol is the substrate of the sterol 14-alpha demethylase encoded by CYP51A, CYP51B and CYP51C, to yield 4,4,24-trimethyl ergosta-8,14,24(28)-trienol. CYP51B encodes the enzyme primarily responsible for sterol 14-alpha-demethylation, and plays an essential role in ascospore formation. CYP51A encodes an additional sterol 14-alpha-demethylase, induced on ergosterol depletion and responsible for the intrinsic variation in azole sensitivity. The third CYP51 isoform, CYP51C, does not encode a sterol 14-alpha-demethylase, but is required for full virulence on host wheat ears. The C-14 reductase ERG24 then reduces the C14=C15 double bond which leads to 4,4-dimethylfecosterol. A sequence of further demethylations at C-4, involving the C-4 demethylation complex containing the C-4 methylsterol oxidases ERG25, the sterol-4-alpha-carboxylate 3-dehydrogenase ERG26 and the 3-keto-steroid reductase ERG27, leads to the production of fecosterol via 4-methylfecosterol. ERG28 has a role as a scaffold to help anchor ERG25, ERG26 and ERG27 to the endoplasmic reticulum. The C-8 sterol isomerase ERG2 then catalyzes the reaction which results in unsaturation at C-7 in the B ring of sterols and thus converts fecosterol to episterol. The sterol-C5-desaturases ERG3A and ERG3BB then catalyze the introduction of a C-5 double bond in the B ring to produce 5-dehydroepisterol. The C-22 sterol desaturases ERG5A and ERG5B further convert 5-dehydroepisterol into ergosta-5,7,22,24(28)-tetraen-3beta-ol by forming the C-22(23) double bond in the sterol side chain. Finally, ergosta-5,7,22,24(28)-tetraen-3beta-ol is substrate of the C-24(28) sterol reductase ERG4 to produce ergosterol. This chain is Sterol-4-alpha-carboxylate 3-dehydrogenase ERG26, decarboxylating, found in Gibberella zeae (strain ATCC MYA-4620 / CBS 123657 / FGSC 9075 / NRRL 31084 / PH-1) (Wheat head blight fungus).